We begin with the raw amino-acid sequence, 224 residues long: ATP phosphoribosyltransferase (224 aa).

Belongs to the ATP phosphoribosyltransferase family. Short subfamily. In terms of assembly, heteromultimer composed of HisG and HisZ subunits.

The protein resides in the cytoplasm. It carries out the reaction 1-(5-phospho-beta-D-ribosyl)-ATP + diphosphate = 5-phospho-alpha-D-ribose 1-diphosphate + ATP. It participates in amino-acid biosynthesis; L-histidine biosynthesis; L-histidine from 5-phospho-alpha-D-ribose 1-diphosphate: step 1/9. Catalyzes the condensation of ATP and 5-phosphoribose 1-diphosphate to form N'-(5'-phosphoribosyl)-ATP (PR-ATP). Has a crucial role in the pathway because the rate of histidine biosynthesis seems to be controlled primarily by regulation of HisG enzymatic activity. This chain is ATP phosphoribosyltransferase, found in Cupriavidus necator (strain ATCC 17699 / DSM 428 / KCTC 22496 / NCIMB 10442 / H16 / Stanier 337) (Ralstonia eutropha).